The following is a 473-amino-acid chain: LEC14B protein (473 aa).

5 WD repeats span residues 212–242 (GYSF…CVYD), 254–285 (AHES…KVWD), 301–331 (GHLE…KLWD), 377–413 (GHSV…YIYD), and 425–455 (YHKA…VKWE).

The protein belongs to the WD repeat LEC14B family.

This chain is LEC14B protein, found in Lithospermum erythrorhizon (Purple gromwell).